The sequence spans 58 residues: Alpha-conotoxin-like Pu1.6 (58 aa).

The first 17 residues, 1-17 (MFTVFLLVVLVTTVVFS), serve as a signal peptide directing secretion. The propeptide occupies 18–35 (TSDHRPASNHENRRASKR). 2 disulfide bridges follow: Cys44/Cys50 and Cys45/Cys58. The tract at residues 46–48 (TNP) is lacks the Ser-Xaa-Pro motif that is crucial for potent interaction with nAChR.

It belongs to the conotoxin A superfamily. In terms of tissue distribution, expressed by the venom duct.

Its subcellular location is the secreted. In terms of biological role, alpha-conotoxins act on postsynaptic membranes, they bind to the nicotinic acetylcholine receptors (nAChR) and thus inhibit them. Has possibly a distinct nAChR binding mode from other alpha-conotoxins, due to a different three residue motif (lacks the Ser-Xaa-Pro motif). This chain is Alpha-conotoxin-like Pu1.6, found in Conus pulicarius (Flea-bitten cone).